We begin with the raw amino-acid sequence, 308 residues long: Tyrosine recombinase XerD (308 aa).

Positions 3 to 89 (NGFTRLTEQF…SIHEFHRFAL (87 aa)) constitute a Core-binding (CB) domain. Residues 110 to 301 (TLPDVLTVDE…SPETLIETYL (192 aa)) form the Tyr recombinase domain. Active-site residues include arginine 153, lysine 177, histidine 253, arginine 256, and histidine 279. The active-site O-(3'-phospho-DNA)-tyrosine intermediate is tyrosine 288.

This sequence belongs to the 'phage' integrase family. XerD subfamily. As to quaternary structure, forms a cyclic heterotetrameric complex composed of two molecules of XerC and two molecules of XerD.

Its subcellular location is the cytoplasm. Functionally, site-specific tyrosine recombinase, which acts by catalyzing the cutting and rejoining of the recombining DNA molecules. The XerC-XerD complex is essential to convert dimers of the bacterial chromosome into monomers to permit their segregation at cell division. It also contributes to the segregational stability of plasmids. The protein is Tyrosine recombinase XerD of Bifidobacterium longum (strain NCC 2705).